The primary structure comprises 696 residues: Catalase (696 aa).

Catalysis depends on residues H64 and N137. Residues 187–211 (SLAQGSQISSERGSPKAYSNTEPNK) are disordered. A compositionally biased stretch (polar residues) spans 189–208 (AQGSQISSERGSPKAYSNTE). Y353 contributes to the heme binding site.

It belongs to the catalase family. It depends on heme as a cofactor.

It carries out the reaction 2 H2O2 = O2 + 2 H2O. Its function is as follows. Occurs in almost all aerobically respiring organisms and serves to protect cells from the toxic effects of hydrogen peroxide. The chain is Catalase from Penicillium janthinellum (Penicillium vitale).